The following is a 459-amino-acid chain: MAASVSTIGAASKAPLSLNNSVAGTSVPSTAFFGKSLKKVYAKGVSSPKVSNRNLRVVAQEVDETKEDRWKGLYDNTSDDQQDIARGKGLVDSLFQAPTGTGTHHAIMNSYEYVSQALKTYQLDNKLDGFYIAPAFMDKLVVHITKNFLTLPNIKVPLILGVWGGKGQGKSFQCELVFRKMGINPIMMSAGELESGNAGEPAKLIRQRYREAAEIIRKGNMCCLFINDLDAGAGRMGGTTQYTVNNQMVNATLMNIADNPTNVQLPGMYNKQENARVPIIVTGNDFSTLYAPLIRDGRMEKFYWAPTREDRIGVCKGIFRTDNVPEEAVVKIVDSFPGQSIDFFGALRARVYDDEVRKWVSGTGIELIGEKLLNSRDGPPTFEQPKMTLEKLLEYGNMLVQEQENVKRVQLAETYLKEAALGDANADAINTGISKNFTNLKSRLNNEEAKKARHVNFQE.

164–171 is a binding site for ATP; it reads GGKGQGKS.

This sequence belongs to the RuBisCO activase family.

The protein resides in the plastid. It localises to the chloroplast stroma. Activation of RuBisCO (ribulose-1,5-bisphosphate carboxylase/oxygenase; EC 4.1.1.39) involves the ATP-dependent carboxylation of the epsilon-amino group of lysine leading to a carbamate structure. The protein is Ribulose bisphosphate carboxylase/oxygenase activase, chloroplastic of Solanum pennellii (Tomato).